We begin with the raw amino-acid sequence, 200 residues long: Lipopolysaccharide core heptose(II)-phosphate phosphatase (200 aa).

Positions 1-25 (MLAFCRSSLKSKKYFIILLALAAIA) are cleaved as a signal peptide.

The protein belongs to the phosphoglycerate mutase family. Ais subfamily.

Its subcellular location is the periplasm. Its pathway is bacterial outer membrane biogenesis; lipopolysaccharide metabolism. Catalyzes the dephosphorylation of heptose(II) of the outer membrane lipopolysaccharide core. This is Lipopolysaccharide core heptose(II)-phosphate phosphatase from Escherichia coli O7:K1 (strain IAI39 / ExPEC).